The sequence spans 677 residues: UvrABC system protein B (677 aa).

One can recognise a Helicase ATP-binding domain in the interval 27-414 (ANLGHGVRDQ…SQGVIAEQII (388 aa)). ATP is bound at residue 40 to 47 (GVTGSGKT). A Beta-hairpin motif is present at residues 93–116 (YYDYYQPEAYVPASDTYIEKDSSI). Positions 432 to 594 (QVDDLLAECR…IEPRTIRKSL (163 aa)) constitute a Helicase C-terminal domain. The UVR domain occupies 638 to 673 (AKHIQKLEREMREAAKELEFERAATLRDRIRLLRER).

Belongs to the UvrB family. As to quaternary structure, forms a heterotetramer with UvrA during the search for lesions. Interacts with UvrC in an incision complex.

The protein resides in the cytoplasm. In terms of biological role, the UvrABC repair system catalyzes the recognition and processing of DNA lesions. A damage recognition complex composed of 2 UvrA and 2 UvrB subunits scans DNA for abnormalities. Upon binding of the UvrA(2)B(2) complex to a putative damaged site, the DNA wraps around one UvrB monomer. DNA wrap is dependent on ATP binding by UvrB and probably causes local melting of the DNA helix, facilitating insertion of UvrB beta-hairpin between the DNA strands. Then UvrB probes one DNA strand for the presence of a lesion. If a lesion is found the UvrA subunits dissociate and the UvrB-DNA preincision complex is formed. This complex is subsequently bound by UvrC and the second UvrB is released. If no lesion is found, the DNA wraps around the other UvrB subunit that will check the other stand for damage. This Nitratidesulfovibrio vulgaris (strain ATCC 29579 / DSM 644 / CCUG 34227 / NCIMB 8303 / VKM B-1760 / Hildenborough) (Desulfovibrio vulgaris) protein is UvrABC system protein B.